The primary structure comprises 406 residues: Succinylornithine transaminase (406 aa).

Lys-252 carries the post-translational modification N6-(pyridoxal phosphate)lysine.

Belongs to the class-III pyridoxal-phosphate-dependent aminotransferase family. AstC subfamily. The cofactor is pyridoxal 5'-phosphate.

The enzyme catalyses N(2)-succinyl-L-ornithine + 2-oxoglutarate = N-succinyl-L-glutamate 5-semialdehyde + L-glutamate. It functions in the pathway amino-acid degradation; L-arginine degradation via AST pathway; L-glutamate and succinate from L-arginine: step 3/5. Catalyzes the transamination of N(2)-succinylornithine and alpha-ketoglutarate into N(2)-succinylglutamate semialdehyde and glutamate. Can also act as an acetylornithine aminotransferase. This chain is Succinylornithine transaminase, found in Escherichia fergusonii (strain ATCC 35469 / DSM 13698 / CCUG 18766 / IAM 14443 / JCM 21226 / LMG 7866 / NBRC 102419 / NCTC 12128 / CDC 0568-73).